We begin with the raw amino-acid sequence, 238 residues long: Ribosomal RNA small subunit methyltransferase G (238 aa).

S-adenosyl-L-methionine is bound by residues glycine 77, phenylalanine 82, alanine 128–glutamate 129, and arginine 147.

This sequence belongs to the methyltransferase superfamily. RNA methyltransferase RsmG family.

It is found in the cytoplasm. Specifically methylates the N7 position of guanine in position 535 of 16S rRNA. The sequence is that of Ribosomal RNA small subunit methyltransferase G from Exiguobacterium sp. (strain ATCC BAA-1283 / AT1b).